The following is a 253-amino-acid chain: Transcriptional regulatory protein TcrA (253 aa).

One can recognise a Response regulatory domain in the interval 24-138 (RILVVEDEPK…ELFARLRALS (115 aa)). Asp-73 is modified (4-aspartylphosphate). Positions 146 to 244 (PPTLEAGDLR…IRGAGYRLRK (99 aa)) form a DNA-binding region, ompR/PhoB-type.

Interacts with HK2. Phosphorylated by HK2.

Its subcellular location is the cytoplasm. In terms of biological role, member of the three-protein two-component system HK1/HK2/TcrA. The sequence is that of Transcriptional regulatory protein TcrA (tcrA) from Mycobacterium tuberculosis (strain ATCC 25618 / H37Rv).